The following is a 180-amino-acid chain: Cell number regulator 7 (180 aa).

A helical membrane pass occupies residues 80 to 102; sequence AAAGAIYTLLACFTGFQCHWIYS.

The protein belongs to the cornifelin family. Expressed in roots, leaves, immature ears and silks. Detected preferentially in silks.

It localises to the membrane. This chain is Cell number regulator 7 (CNR7), found in Zea mays (Maize).